The following is an 88-amino-acid chain: Small ribosomal subunit protein bS20 (88 aa).

2 disordered regions span residues 1-23 (MANT…VNKA) and 65-88 (GVMH…SLSA).

This sequence belongs to the bacterial ribosomal protein bS20 family.

Binds directly to 16S ribosomal RNA. This chain is Small ribosomal subunit protein bS20, found in Rhizobium meliloti (strain 1021) (Ensifer meliloti).